Reading from the N-terminus, the 252-residue chain is Trans-aconitate 2-methyltransferase (252 aa).

The protein belongs to the methyltransferase superfamily. Tam family.

The protein resides in the cytoplasm. The enzyme catalyses trans-aconitate + S-adenosyl-L-methionine = (E)-3-(methoxycarbonyl)pent-2-enedioate + S-adenosyl-L-homocysteine. Its function is as follows. Catalyzes the S-adenosylmethionine monomethyl esterification of trans-aconitate. This chain is Trans-aconitate 2-methyltransferase, found in Escherichia coli O6:K15:H31 (strain 536 / UPEC).